The following is an 816-amino-acid chain: Sucrose synthase 2 (816 aa).

Ser-15 carries the post-translational modification Phosphoserine. Residues 280-757 (MVFNVVILSP…GLQRIEEKYT (478 aa)) are GT-B glycosyltransferase.

The protein belongs to the glycosyltransferase 1 family. Plant sucrose synthase subfamily.

The catalysed reaction is an NDP-alpha-D-glucose + D-fructose = a ribonucleoside 5'-diphosphate + sucrose + H(+). Sucrose-cleaving enzyme that provides UDP-glucose and fructose for various metabolic pathways. The polypeptide is Sucrose synthase 2 (SUS1) (Zea mays (Maize)).